Reading from the N-terminus, the 20-residue chain is Unknown protein from 2D-PAGE (20 aa).

This chain is Unknown protein from 2D-PAGE, found in Nicotiana tabacum (Common tobacco).